The primary structure comprises 546 residues: Chaperonin GroEL (546 aa).

ATP contacts are provided by residues 29 to 32, lysine 50, 86 to 90, glycine 415, and aspartate 495; these read TLGP and DGTTT. A disordered region spans residues 526–546; sequence EDNAGGGGMPQGMGGGMPGMM. Residues 529–546 show a composition bias toward gly residues; that stretch reads AGGGGMPQGMGGGMPGMM.

The protein belongs to the chaperonin (HSP60) family. As to quaternary structure, forms a cylinder of 14 subunits composed of two heptameric rings stacked back-to-back. Interacts with the co-chaperonin GroES.

Its subcellular location is the cytoplasm. It catalyses the reaction ATP + H2O + a folded polypeptide = ADP + phosphate + an unfolded polypeptide.. In terms of biological role, together with its co-chaperonin GroES, plays an essential role in assisting protein folding. The GroEL-GroES system forms a nano-cage that allows encapsulation of the non-native substrate proteins and provides a physical environment optimized to promote and accelerate protein folding. The chain is Chaperonin GroEL from Christiangramia forsetii (strain DSM 17595 / CGMCC 1.15422 / KT0803) (Gramella forsetii).